Reading from the N-terminus, the 284-residue chain is Stomatin (284 aa).

The Cytoplasmic segment spans residues 1–31 (MSDKRQSSHVQSQRIPESFRENSKTELGACG). Position 18 is a phosphoserine (S18). Residue C30 is the site of S-palmitoyl cysteine attachment. Residues 32–52 (WILVAASFFFVIITFPISIWI) lie within the membrane without spanning it. Residues 53-284 (CIKIVKEYER…MLQGIMGSNH (232 aa)) lie on the Cytoplasmic side of the membrane. A lipid anchor (S-palmitoyl cysteine) is attached at C87. 2 positions are modified to phosphoserine: S161 and S244. The segment at 265–273 (STIVFPLPV) is required for homooligomerization. A required for lipid raft association region spans residues 267–269 (IVF). The interval 273-284 (VDMLQGIMGSNH) is interaction with LANCL1.

Belongs to the band 7/mec-2 family. As to quaternary structure, interacts with LANCL1. Interacts with SLC2A1. Interacts with SLC4A1; this interaction positively regulates SLC4A1 activity. Identified in large complexes with SLC40A1, SLC14A1, SLC29A1 and AQP1. Homodimer and higher order homooligomers. The homodimer is banana-shaped. Interacts with ASIC1, ASIC2 and ASIC3. Interacts with STOML1; may redistribute STOM from the plasma membrane to late endosomes. As to expression, expressed in all sensory neurons of the dorsal root ganglia. In the CNS, expressed in many neurons of the spinal cord, medulla and pons. Expressed only in scattered neurons in the cortex, hippocampus, thalamus and basal ganglia. In the cerebellum, expressed in all Purkinje cells (at protein level). Widely expressed with high levels in heart, liver, skeletal muscle and testis and low levels in lung, brain and spleen.

Its subcellular location is the cell membrane. The protein resides in the cytoplasm. The protein localises to the cytoskeleton. It is found in the membrane raft. It localises to the melanosome. Its subcellular location is the cytoplasmic vesicle. Regulates ion channel activity and transmembrane ion transport. Regulates ASIC2 and ASIC3 channel activity. This is Stomatin from Mus musculus (Mouse).